The primary structure comprises 581 residues: DNA primase (581 aa).

A CHC2-type zinc finger spans residues 40–64 (CPFHNEKTPSFTVNGEKQFYHCFGC). The region spanning 259–341 (QRLLVVEGYM…GRQVRFMFLP (83 aa)) is the Toprim domain. 3 residues coordinate Mg(2+): glutamate 265, aspartate 309, and aspartate 311.

It belongs to the DnaG primase family. In terms of assembly, monomer. Interacts with DnaB. The cofactor is Zn(2+). Mg(2+) serves as cofactor.

The catalysed reaction is ssDNA + n NTP = ssDNA/pppN(pN)n-1 hybrid + (n-1) diphosphate.. RNA polymerase that catalyzes the synthesis of short RNA molecules used as primers for DNA polymerase during DNA replication. This chain is DNA primase, found in Salmonella typhimurium (strain LT2 / SGSC1412 / ATCC 700720).